The primary structure comprises 139 residues: MSWSGPLRGLNTSLTCGPALVPRLWATCSMATLNQMHRLGGPPKRPPQKLGPTEGRPQLKGVVLCTFTRKPKKPNSANRKCCRVRLSTGQEAVCFIPGEGHTLQEHQIVLVEGGRTQDLPGVKLTVVRGKYDCGHVQKK.

The transit peptide at 1–29 (MSWSGPLRGLNTSLTCGPALVPRLWATCS) directs the protein to the mitochondrion. Residues 36–56 (MHRLGGPPKRPPQKLGPTEGR) are disordered.

The protein belongs to the universal ribosomal protein uS12 family. As to quaternary structure, component of the mitochondrial ribosome small subunit (28S) which comprises a 12S rRNA and about 30 distinct proteins.

Its subcellular location is the mitochondrion. This chain is Small ribosomal subunit protein uS12m (MRPS12), found in Pongo abelii (Sumatran orangutan).